The chain runs to 214 residues: Phosphatidylserine decarboxylase proenzyme (214 aa).

Catalysis depends on serine 183, which acts as the Schiff-base intermediate with substrate; via pyruvic acid. Serine 183 carries the pyruvic acid (Ser); by autocatalysis modification.

This sequence belongs to the phosphatidylserine decarboxylase family. PSD-A subfamily. In terms of assembly, heterodimer of a large membrane-associated beta subunit and a small pyruvoyl-containing alpha subunit. Pyruvate serves as cofactor. In terms of processing, is synthesized initially as an inactive proenzyme. Formation of the active enzyme involves a self-maturation process in which the active site pyruvoyl group is generated from an internal serine residue via an autocatalytic post-translational modification. Two non-identical subunits are generated from the proenzyme in this reaction, and the pyruvate is formed at the N-terminus of the alpha chain, which is derived from the carboxyl end of the proenzyme. The post-translation cleavage follows an unusual pathway, termed non-hydrolytic serinolysis, in which the side chain hydroxyl group of the serine supplies its oxygen atom to form the C-terminus of the beta chain, while the remainder of the serine residue undergoes an oxidative deamination to produce ammonia and the pyruvoyl prosthetic group on the alpha chain.

It is found in the cell membrane. The enzyme catalyses a 1,2-diacyl-sn-glycero-3-phospho-L-serine + H(+) = a 1,2-diacyl-sn-glycero-3-phosphoethanolamine + CO2. Its pathway is phospholipid metabolism; phosphatidylethanolamine biosynthesis; phosphatidylethanolamine from CDP-diacylglycerol: step 2/2. Catalyzes the formation of phosphatidylethanolamine (PtdEtn) from phosphatidylserine (PtdSer). The protein is Phosphatidylserine decarboxylase proenzyme of Desulfotalea psychrophila (strain LSv54 / DSM 12343).